A 432-amino-acid chain; its full sequence is Trigger factor (432 aa).

Residues 163 to 248 (GDVVVLDFAA…VHAVKERRLP (86 aa)) form the PPIase FKBP-type domain.

Belongs to the FKBP-type PPIase family. Tig subfamily.

The protein localises to the cytoplasm. The enzyme catalyses [protein]-peptidylproline (omega=180) = [protein]-peptidylproline (omega=0). Involved in protein export. Acts as a chaperone by maintaining the newly synthesized protein in an open conformation. Functions as a peptidyl-prolyl cis-trans isomerase. The chain is Trigger factor from Nitratidesulfovibrio vulgaris (strain DSM 19637 / Miyazaki F) (Desulfovibrio vulgaris).